The primary structure comprises 498 residues: GTPase Der (498 aa).

EngA-type G domains lie at 3-166 and 212-385; these read PVVA…FEEL and IKFA…RSAT. GTP contacts are provided by residues 9-16, 56-60, 118-121, 218-225, 265-269, and 330-333; these read GRPNVGKS, DTGGI, NKTD, DTAGV, and NKWD. One can recognise a KH-like domain in the interval 386–470; it reads KRISTSMLTR…PIHIEFQEGD (85 aa).

Belongs to the TRAFAC class TrmE-Era-EngA-EngB-Septin-like GTPase superfamily. EngA (Der) GTPase family. In terms of assembly, associates with the 50S ribosomal subunit.

GTPase that plays an essential role in the late steps of ribosome biogenesis. This Tolumonas auensis (strain DSM 9187 / NBRC 110442 / TA 4) protein is GTPase Der.